We begin with the raw amino-acid sequence, 341 residues long: Glycerol-3-phosphate dehydrogenase [NAD(P)+] (341 aa).

Positions 14, 15, 35, and 108 each coordinate NADPH. Sn-glycerol 3-phosphate contacts are provided by Lys-108 and Gly-136. NADPH is bound at residue Ala-140. Sn-glycerol 3-phosphate contacts are provided by Lys-191, Asp-244, Ser-254, Arg-255, and Asn-256. Lys-191 serves as the catalytic Proton acceptor. Arg-255 contributes to the NADPH binding site. Val-279 and Glu-281 together coordinate NADPH.

The protein belongs to the NAD-dependent glycerol-3-phosphate dehydrogenase family.

The protein resides in the cytoplasm. The catalysed reaction is sn-glycerol 3-phosphate + NAD(+) = dihydroxyacetone phosphate + NADH + H(+). The enzyme catalyses sn-glycerol 3-phosphate + NADP(+) = dihydroxyacetone phosphate + NADPH + H(+). The protein operates within membrane lipid metabolism; glycerophospholipid metabolism. Catalyzes the reduction of the glycolytic intermediate dihydroxyacetone phosphate (DHAP) to sn-glycerol 3-phosphate (G3P), the key precursor for phospholipid synthesis. In Pseudomonas syringae pv. syringae (strain B728a), this protein is Glycerol-3-phosphate dehydrogenase [NAD(P)+].